A 130-amino-acid chain; its full sequence is Small ribosomal subunit protein uS9 (130 aa).

This sequence belongs to the universal ribosomal protein uS9 family.

In Streptococcus gordonii (strain Challis / ATCC 35105 / BCRC 15272 / CH1 / DL1 / V288), this protein is Small ribosomal subunit protein uS9.